The chain runs to 673 residues: MGKDVALDFLPSSLYSCTCSCDGKLAFCDSEKVQILVPSTEANTPKFMKALAYLDDVEDELPNCQMLAPNELRLGDLTPSVISRYVVWSPTGLADNYDPLLTVLTNRHRVYFFSSSSRVLHQKWTCVAQMSTHLPSDPLELCRIHSVAWSPLVSLPSSSPWGVCLFALGAESGHVHLSIMSHSSTPFFKSFDLNCSWVVQLSFSSWNVVGDSATCLLSCSSRNGEIRILKIAISSHSDTFDTAMQELPFSLDYRPFSPLLAWSSPLANVEYLALVYPGHLFAFRYDKSLGKFCSFLNHNLLSLCSPSGVLFGHNDIDTIYVYILTHSGTLETFSLLDNSISMLDSPERHVLEKFLNNHLQNYGSVSDDSIKTLKIHGFCPSPYLSSAALHFSISYPASFTYVVTAAERSYFNFIPSLFSKSVFSHMITSSLNNLCVAPSAGCLLEISLMNDTLKEKTDIFTMLTNSLSSFLVTDYDFFLELKHLIDISSLSNLYLDSSLNAMRLLYGWSVYKQKALDATLLNSLRYRLTLYIMLYTLSQISLDPSYLTSDCKAVLRNFVSFTYKELAEVPIAMEVANEIAKSLEVSSDFSETCPACEATVQFNNTSLATCDNGHVWRRCSVTMLLLSQKAAKYCAVCNSIVAIFNPSQTKCLLADLQNELSICFYCGGHFLVS.

As to quaternary structure, may be a component of the TFIIIC complex.

It is found in the nucleus. The protein is Putative transcription factor tau subunit sfc9 of Schizosaccharomyces pombe (strain 972 / ATCC 24843) (Fission yeast).